Reading from the N-terminus, the 577-residue chain is Arginine--tRNA ligase (577 aa).

The 'HIGH' region signature appears at 122–132 (PNVAKEMHVGH).

This sequence belongs to the class-I aminoacyl-tRNA synthetase family. In terms of assembly, monomer.

It localises to the cytoplasm. It catalyses the reaction tRNA(Arg) + L-arginine + ATP = L-arginyl-tRNA(Arg) + AMP + diphosphate. The chain is Arginine--tRNA ligase from Salmonella paratyphi A (strain ATCC 9150 / SARB42).